Reading from the N-terminus, the 309-residue chain is Glutaminase (309 aa).

Substrate-binding residues include Ser64, Asn114, Glu160, Asn167, Tyr191, Tyr243, and Val261.

The protein belongs to the glutaminase family. Homotetramer.

It carries out the reaction L-glutamine + H2O = L-glutamate + NH4(+). The sequence is that of Glutaminase from Methylorubrum populi (strain ATCC BAA-705 / NCIMB 13946 / BJ001) (Methylobacterium populi).